A 130-amino-acid polypeptide reads, in one-letter code: Ribosome-binding factor A (130 aa).

The protein belongs to the RbfA family. Monomer. Binds 30S ribosomal subunits, but not 50S ribosomal subunits or 70S ribosomes.

It localises to the cytoplasm. Its function is as follows. One of several proteins that assist in the late maturation steps of the functional core of the 30S ribosomal subunit. Associates with free 30S ribosomal subunits (but not with 30S subunits that are part of 70S ribosomes or polysomes). Required for efficient processing of 16S rRNA. May interact with the 5'-terminal helix region of 16S rRNA. This chain is Ribosome-binding factor A, found in Prochlorococcus marinus (strain SARG / CCMP1375 / SS120).